The following is a 500-amino-acid chain: Prostacyclin synthase (500 aa).

The helical transmembrane segment at 1–20 (MSWAVVFGLLAALLLLLLLT) threads the bilayer. Substrate is bound by residues arginine 106, leucine 112, asparagine 287, 358-359 (TR), and arginine 382. Cysteine 441 is a binding site for heme.

The protein belongs to the cytochrome P450 family. The cofactor is heme.

The protein resides in the endoplasmic reticulum membrane. It carries out the reaction prostaglandin H2 = prostaglandin I2. The catalysed reaction is a hydroperoxyeicosatetraenoate = an oxoeicosatetraenoate + H2O. The enzyme catalyses (15S)-hydroperoxy-(5Z,8Z,11Z,13E)-eicosatetraenoate = 15-oxo-(5Z,8Z,11Z,13E)-eicosatetraenoate + H2O. It catalyses the reaction (15S)-hydroperoxy-(5Z,8Z,11Z,13E)-eicosatetraenoate + AH2 = (15S)-hydroxy-(5Z,8Z,11Z,13E)-eicosatetraenoate + A + H2O. Its function is as follows. Catalyzes the biosynthesis and metabolism of eicosanoids. Catalyzes the isomerization of prostaglandin H2 to prostacyclin (= prostaglandin I2), a potent mediator of vasodilation and inhibitor of platelet aggregation. Additionally, displays dehydratase activity, toward hydroperoxyeicosatetraenoates (HPETEs), especially toward (15S)-hydroperoxy-(5Z,8Z,11Z,13E)-eicosatetraenoate (15(S)-HPETE). This Bos taurus (Bovine) protein is Prostacyclin synthase (PTGIS).